The following is a 508-amino-acid chain: Arabinose import ATP-binding protein AraG (508 aa).

ABC transporter domains lie at 5 to 240 (LEFQ…MVGR) and 250 to 496 (ARTL…LPDA). 37–44 (GENGAGKS) serves as a coordination point for ATP.

This sequence belongs to the ABC transporter superfamily. Arabinose importer (TC 3.A.1.2.2) family. The complex is composed of two ATP-binding proteins (AraG), two transmembrane proteins (AraH) and a solute-binding protein (AraF).

The protein localises to the cell inner membrane. The catalysed reaction is L-arabinose(out) + ATP + H2O = L-arabinose(in) + ADP + phosphate + H(+). Part of the ABC transporter complex AraFGH involved in arabinose import. Responsible for energy coupling to the transport system. The protein is Arabinose import ATP-binding protein AraG of Rhizobium meliloti (strain 1021) (Ensifer meliloti).